We begin with the raw amino-acid sequence, 260 residues long: 4-hydroxy-tetrahydrodipicolinate reductase (260 aa).

NAD(+) is bound by residues 12 to 17 (GFRGKM), 92 to 94 (GTT), and 118 to 121 (APNF). The Proton donor/acceptor role is filled by His148. His149 contacts (S)-2,3,4,5-tetrahydrodipicolinate. Lys152 functions as the Proton donor in the catalytic mechanism. 158 to 159 (GT) contributes to the (S)-2,3,4,5-tetrahydrodipicolinate binding site.

This sequence belongs to the DapB family.

The protein localises to the cytoplasm. The catalysed reaction is (S)-2,3,4,5-tetrahydrodipicolinate + NAD(+) + H2O = (2S,4S)-4-hydroxy-2,3,4,5-tetrahydrodipicolinate + NADH + H(+). The enzyme catalyses (S)-2,3,4,5-tetrahydrodipicolinate + NADP(+) + H2O = (2S,4S)-4-hydroxy-2,3,4,5-tetrahydrodipicolinate + NADPH + H(+). It participates in amino-acid biosynthesis; L-lysine biosynthesis via DAP pathway; (S)-tetrahydrodipicolinate from L-aspartate: step 4/4. In terms of biological role, catalyzes the conversion of 4-hydroxy-tetrahydrodipicolinate (HTPA) to tetrahydrodipicolinate. The chain is 4-hydroxy-tetrahydrodipicolinate reductase from Lactococcus lactis subsp. cremoris (strain MG1363).